Here is a 199-residue protein sequence, read N- to C-terminus: uncharacterized protein (199 aa).

The stretch at 71-104 (RANATNKLTVIAEQIQHLQEQARKVLEDARRDAD) forms a coiled coil.

This is an uncharacterized protein from Mus musculus (Mouse).